Here is a 419-residue protein sequence, read N- to C-terminus: POU domain, class 4, transcription factor 1 (419 aa).

The POU-IV box signature appears at 57–66 (RAEALAAVDI). Disordered stretches follow at residues 94 to 117 (STVPLAHHHHHHHHHQALEPGDLL) and 131 to 197 (AGGA…HSLG). Over residues 99–108 (AHHHHHHHHH) the composition is skewed to basic residues. Gly residues predominate over residues 131–184 (AGGAGAAAGGGGAHDGPGGGGGPGGGGGPGGGPGGGGGGGPGGGGGGPGGGLLG). The POU-specific domain maps to 261 to 338 (SDTDPRELEA…LQAWLEEAEG (78 aa)). Residues 356-415 (KRKRTSIAAPEKRSLEAYFAVQPRPSSEKIAAIAEKLDLKKNVVRVWFCNQRQKQKRMKF) constitute a DNA-binding region (homeobox).

This sequence belongs to the POU transcription factor family. Class-4 subfamily. As to quaternary structure, interacts (via N-terminus) with RIT2; the interaction controls POU4F1 transactivation activity on some neuronal target genes. Isoform 1 interacts with POU4F2; this interaction inhibits both POU4F1 DNA-binding and transcriptional activities. Isoform 1 interacts (C-terminus) with ESR1 (via DNA-binding domain); this interaction decreases the estrogen receptor ESR1 transcriptional activity in a DNA- and ligand 17-beta-estradiol-independent manner. In terms of tissue distribution, expressed in the brain and the retina. Present in the developing brain, spinal cord and eye.

The protein resides in the nucleus. Its subcellular location is the cytoplasm. Functionally, multifunctional transcription factor with different regions mediating its different effects. Acts by binding (via its C-terminal domain) to sequences related to the consensus octamer motif 5'-ATGCAAAT-3' in the regulatory regions of its target genes. Regulates the expression of specific genes involved in differentiation and survival within a subset of neuronal lineages. It has been shown that activation of some of these genes requires its N-terminal domain, maybe through a neuronal-specific cofactor. Activates BCL2 expression and protects neuronal cells from apoptosis (via the N-terminal domain). Induces neuronal process outgrowth and the coordinate expression of genes encoding synaptic proteins. Exerts its major developmental effects in somatosensory neurons and in brainstem nuclei involved in motor control. Stimulates the binding affinity of the nuclear estrogene receptor ESR1 to DNA estrogen response element (ERE), and hence modulates ESR1-induced transcriptional activity. May positively regulate POU4F2 and POU4F3. Regulates dorsal root ganglion sensory neuron specification and axonal projection into the spinal cord. Plays a role in TNFSF11-mediated terminal osteoclast differentiation. Negatively regulates its own expression interacting directly with a highly conserved autoregulatory domain surrounding the transcription initiation site. In terms of biological role, able to act as transcription factor, cannot regulate the expression of the same subset of genes than isoform 1. Does not have antiapoptotic effect on neuronal cells. The sequence is that of POU domain, class 4, transcription factor 1 from Homo sapiens (Human).